The sequence spans 207 residues: Claudin-11 (207 aa).

Position 1 (M1) is a topological domain, cytoplasmic. The helical transmembrane segment at 2-22 threads the bilayer; it reads VATCLQVVGFVTSFVGWIGVI. Over 23 to 82 the chain is Extracellular; the sequence is VTTSTNDWVVTCGYTIPTCRKLDELGSKGLWADCVMATGLYHCKPLVDILILPGYVQACR. The chain crosses the membrane as a helical span at residues 83–103; sequence ALMIAASVLGLPAILLLLTVL. Residues 104-122 lie on the Cytoplasmic side of the membrane; it reads PCIRMGHEPGVAKYRRAQL. The chain crosses the membrane as a helical span at residues 123–143; that stretch reads AGVLLILLALCAIVATIWFPV. Residues 144 to 157 are Extracellular-facing; the sequence is CAHRETTIVSFGYS. The chain crosses the membrane as a helical span at residues 158-178; the sequence is LYAGWIGAVLCLVGGCVILCC. Residues 179-207 are Cytoplasmic-facing; the sequence is AGDAQAFGENRFYYSSGSSSPTHAKSAHV. S193, S194, S197, and S198 each carry phosphoserine.

Belongs to the claudin family. In terms of assembly, interacts with tetraspanin-3/TSPAN3. Interacts with OCLN.

The protein localises to the cell junction. It is found in the tight junction. The protein resides in the cell membrane. Its function is as follows. Plays a major role in tight junction-specific obliteration of the intercellular space, through calcium-independent cell-adhesion activity. The sequence is that of Claudin-11 (CLDN11) from Macaca fascicularis (Crab-eating macaque).